The following is a 289-amino-acid chain: Oxaloacetate decarboxylase (289 aa).

Ser50 lines the substrate pocket. Position 88 (Asp88) interacts with Mg(2+). Substrate-binding residues include Arg159 and His235.

The protein belongs to the isocitrate lyase family. Oxaloacetate decarboxylase subfamily. Homotetramer; dimer of dimers. Mg(2+) serves as cofactor.

The catalysed reaction is oxaloacetate + H(+) = pyruvate + CO2. Functionally, catalyzes the decarboxylation of oxaloacetate into pyruvate. Seems to play a role in maintaining cellular concentrations of bicarbonate and pyruvate. This chain is Oxaloacetate decarboxylase, found in Pseudomonas fluorescens (strain SBW25).